We begin with the raw amino-acid sequence, 116 residues long: Small ribosomal subunit protein bS16 (116 aa).

It belongs to the bacterial ribosomal protein bS16 family.

The sequence is that of Small ribosomal subunit protein bS16 from Chlamydia muridarum (strain MoPn / Nigg).